A 41-amino-acid polypeptide reads, in one-letter code: Large ribosomal subunit protein bL36 (41 aa).

This sequence belongs to the bacterial ribosomal protein bL36 family.

The polypeptide is Large ribosomal subunit protein bL36 (Edwardsiella ictaluri (strain 93-146)).